Here is a 392-residue protein sequence, read N- to C-terminus: Phosphoglycerate kinase (392 aa).

Residues 26–28 (DLN), arginine 41, 64–67 (HLGR), arginine 118, and arginine 151 each bind substrate. ATP-binding positions include lysine 202, glutamate 319, and 345–348 (GGDT).

This sequence belongs to the phosphoglycerate kinase family. As to quaternary structure, monomer.

It localises to the cytoplasm. The enzyme catalyses (2R)-3-phosphoglycerate + ATP = (2R)-3-phospho-glyceroyl phosphate + ADP. The protein operates within carbohydrate degradation; glycolysis; pyruvate from D-glyceraldehyde 3-phosphate: step 2/5. This Photobacterium profundum (strain SS9) protein is Phosphoglycerate kinase.